The chain runs to 178 residues: Fatty-acid and retinol-binding protein 1 (178 aa).

A signal peptide spans 1-16 (MYHQLILLALIGTIMA). 2 coiled-coil regions span residues 67 to 89 (DAALEALKDKSDKLYKNAVELRN) and 129 to 154 (IKQAARDIIAKYQALNEETKEELKVT).

The protein belongs to the fatty-acid and retinol-binding protein (FARBP) family. Post-translationally, not glycosylated.

Its subcellular location is the secreted. In terms of biological role, binds retinol and different fatty acids. This chain is Fatty-acid and retinol-binding protein 1, found in Loa loa (Eye worm).